A 460-amino-acid chain; its full sequence is Elongation factor 1-alpha 3 (460 aa).

Residues 6–243 (KTHINIVVIG…DCIIPPQRPT (238 aa)) enclose the tr-type G domain. Residues 15–22 (GHVDSGKS) are G1. The tract at residues 71–75 (GITID) is G2. Residues 92–95 (DAPG) form a G3 region. A G4 region spans residues 154–157 (NKMD). A G5 region spans residues 195–197 (SGF). A 5-glutamyl glycerylphosphorylethanolamine mark is found at Glu302 and Glu375.

It belongs to the TRAFAC class translation factor GTPase superfamily. Classic translation factor GTPase family. EF-Tu/EF-1A subfamily.

The protein localises to the cytoplasm. Its function is as follows. This protein promotes the GTP-dependent binding of aminoacyl-tRNA to the A-site of ribosomes during protein biosynthesis. This chain is Elongation factor 1-alpha 3 (eft-3), found in Oscheius tipulae.